We begin with the raw amino-acid sequence, 370 residues long: tRNA-specific 2-thiouridylase MnmA (370 aa).

ATP contacts are provided by residues 9-16 (GLSGGVDS) and Met35. Positions 95–97 (NPD) are interaction with target base in tRNA. Cys100 acts as the Nucleophile in catalysis. Cys100 and Cys198 are disulfide-bonded. Residue Gly124 coordinates ATP. The tract at residues 148–150 (KDQ) is interaction with tRNA. Residue Cys198 is the Cysteine persulfide intermediate of the active site. An interaction with tRNA region spans residues 316 to 317 (RY).

This sequence belongs to the MnmA/TRMU family.

It localises to the cytoplasm. The enzyme catalyses S-sulfanyl-L-cysteinyl-[protein] + uridine(34) in tRNA + AH2 + ATP = 2-thiouridine(34) in tRNA + L-cysteinyl-[protein] + A + AMP + diphosphate + H(+). Functionally, catalyzes the 2-thiolation of uridine at the wobble position (U34) of tRNA, leading to the formation of s(2)U34. The chain is tRNA-specific 2-thiouridylase MnmA from Acidovorax ebreus (strain TPSY) (Diaphorobacter sp. (strain TPSY)).